The following is a 168-amino-acid chain: Crossover junction endodeoxyribonuclease RuvC (168 aa).

Catalysis depends on residues D10, E70, and D143. Residues D10, E70, and D143 each coordinate Mg(2+).

This sequence belongs to the RuvC family. In terms of assembly, homodimer which binds Holliday junction (HJ) DNA. The HJ becomes 2-fold symmetrical on binding to RuvC with unstacked arms; it has a different conformation from HJ DNA in complex with RuvA. In the full resolvosome a probable DNA-RuvA(4)-RuvB(12)-RuvC(2) complex forms which resolves the HJ. Requires Mg(2+) as cofactor.

The protein localises to the cytoplasm. The catalysed reaction is Endonucleolytic cleavage at a junction such as a reciprocal single-stranded crossover between two homologous DNA duplexes (Holliday junction).. In terms of biological role, the RuvA-RuvB-RuvC complex processes Holliday junction (HJ) DNA during genetic recombination and DNA repair. Endonuclease that resolves HJ intermediates. Cleaves cruciform DNA by making single-stranded nicks across the HJ at symmetrical positions within the homologous arms, yielding a 5'-phosphate and a 3'-hydroxyl group; requires a central core of homology in the junction. The consensus cleavage sequence is 5'-(A/T)TT(C/G)-3'. Cleavage occurs on the 3'-side of the TT dinucleotide at the point of strand exchange. HJ branch migration catalyzed by RuvA-RuvB allows RuvC to scan DNA until it finds its consensus sequence, where it cleaves and resolves the cruciform DNA. This Roseiflexus sp. (strain RS-1) protein is Crossover junction endodeoxyribonuclease RuvC.